A 369-amino-acid polypeptide reads, in one-letter code: Cytochrome b561 and DOMON domain-containing protein At3g07570 (369 aa).

Positions methionine 1 to alanine 22 are cleaved as a signal peptide. The DOMON domain occupies glutamine 55–glycine 167. The Cytochrome b561 domain maps to serine 174–lysine 369. Residues threonine 212 to alanine 232 traverse the membrane as a helical segment. Residues histidine 213 and histidine 246 each contribute to the heme b site. 2 consecutive transmembrane segments (helical) span residues isoleucine 247–leucine 267 and histidine 279–alanine 299. Positions 279 and 315 each coordinate heme b. The next 2 membrane-spanning stretches (helical) occupy residues leucine 321–threonine 341 and tryptophan 343–valine 363.

Heme b serves as cofactor.

It localises to the membrane. Functionally, may act as a catecholamine-responsive trans-membrane electron transporter. In Arabidopsis thaliana (Mouse-ear cress), this protein is Cytochrome b561 and DOMON domain-containing protein At3g07570.